The following is a 307-amino-acid chain: MVPVHAHDYVTDPPSTTGRTLDGLTLPRVFADAVHRGGDAVALVDGEYALTWSAWRTAVDALARGLQESGVVSGDVVALHLPNSWEYLTLHLAAASVGAVTMPVHQGNAPSDVRALLERVRPAAVVLTARTQEGGGPLTGPALREVLPELRAVLVTGDAAGEGTETVTEMLERWSGEDPLPVEVRPDSPFLLLPSSGTTSARPKICLHSHEGLLTNSRAATEDTADAYAGTLITACPLTHCFGLQSAYSALFRAGRQVLLSGWDVGRFLELARRERPSVVVAVPASCTTWSPGCARTRTAPASARPD.

Belongs to the ATP-dependent AMP-binding enzyme family.

Its pathway is antibiotic biosynthesis; candicidin biosynthesis. Its function is as follows. May be a p-aminobenzoic acid-CoA ligase that activates PabA to start the biosynthesis of candicidin. This is Protein Y from Streptomyces griseus.